The chain runs to 93 residues: Acylphosphatase (93 aa).

The Acylphosphatase-like domain occupies 3–93; the sequence is KQQYFISGKV…FQFNNFKIYY (91 aa). Catalysis depends on residues Arg-18 and Asn-36.

This sequence belongs to the acylphosphatase family.

The enzyme catalyses an acyl phosphate + H2O = a carboxylate + phosphate + H(+). This chain is Acylphosphatase (acyP), found in Borrelia garinii subsp. bavariensis (strain ATCC BAA-2496 / DSM 23469 / PBi) (Borreliella bavariensis).